The sequence spans 343 residues: GTP 3',8-cyclase (343 aa).

Positions 19-244 (PYGRTISYLR…TDVDDSTGGP (226 aa)) constitute a Radical SAM core domain. R28 is a GTP binding site. Residues C35 and C39 each coordinate [4Fe-4S] cluster. Y41 is an S-adenosyl-L-methionine binding site. C42 provides a ligand contact to [4Fe-4S] cluster. R77 is a binding site for GTP. G81 contacts S-adenosyl-L-methionine. T111 is a binding site for GTP. Residue S135 participates in S-adenosyl-L-methionine binding. K171 is a binding site for GTP. M205 is an S-adenosyl-L-methionine binding site. Positions 268 and 271 each coordinate [4Fe-4S] cluster. 273 to 275 (RVR) is a binding site for GTP. C285 is a [4Fe-4S] cluster binding site.

The protein belongs to the radical SAM superfamily. MoaA family. In terms of assembly, monomer and homodimer. [4Fe-4S] cluster serves as cofactor.

It carries out the reaction GTP + AH2 + S-adenosyl-L-methionine = (8S)-3',8-cyclo-7,8-dihydroguanosine 5'-triphosphate + 5'-deoxyadenosine + L-methionine + A + H(+). It functions in the pathway cofactor biosynthesis; molybdopterin biosynthesis. Catalyzes the cyclization of GTP to (8S)-3',8-cyclo-7,8-dihydroguanosine 5'-triphosphate. The protein is GTP 3',8-cyclase of Nitrobacter hamburgensis (strain DSM 10229 / NCIMB 13809 / X14).